The chain runs to 250 residues: Flavin-dependent thymidylate synthase (250 aa).

Residues 7–233 form the ThyX domain; that stretch reads LRVQLIAKTE…PQVFSDFEIV (227 aa). Residues Ser-71, 95-97, and Gln-103 contribute to the FAD site; that span reads RHR. DUMP-binding positions include 92-95, 103-107, and Arg-172; these read ELIR and QLSQR. The ThyX motif signature appears at 95-105; sequence RHRHFSYSQLS. Residues 188–190 and His-194 each bind FAD; that span reads NYR. Arg-199 is a dUMP binding site. Arg-199 acts as the Involved in ionization of N3 of dUMP, leading to its activation in catalysis.

This sequence belongs to the thymidylate synthase ThyX family. Homotetramer. Requires FAD as cofactor.

The enzyme catalyses dUMP + (6R)-5,10-methylene-5,6,7,8-tetrahydrofolate + NADPH + H(+) = dTMP + (6S)-5,6,7,8-tetrahydrofolate + NADP(+). Its pathway is pyrimidine metabolism; dTTP biosynthesis. Its function is as follows. Catalyzes the reductive methylation of 2'-deoxyuridine-5'-monophosphate (dUMP) to 2'-deoxythymidine-5'-monophosphate (dTMP) while utilizing 5,10-methylenetetrahydrofolate (mTHF) as the methyl donor, and NADPH and FADH(2) as the reductant. This Mycolicibacterium vanbaalenii (strain DSM 7251 / JCM 13017 / BCRC 16820 / KCTC 9966 / NRRL B-24157 / PYR-1) (Mycobacterium vanbaalenii) protein is Flavin-dependent thymidylate synthase.